We begin with the raw amino-acid sequence, 281 residues long: 16S rRNA (guanine(1405)-N(7))-methyltransferase (281 aa).

Residues Y60, 105 to 107, R111, G136, D160, 186 to 187, F203, and Q212 contribute to the S-adenosyl-L-methionine site; these read HTS and QG.

The protein belongs to the methyltransferase superfamily. Aminoglycoside resistance family.

The enzyme catalyses guanosine(1405) in 16S rRNA + S-adenosyl-L-methionine = N(7)-methylguanosine(1405) in 16S rRNA + S-adenosyl-L-homocysteine. Functionally, specifically methylates the N(7) position of guanine 1405 in 16S rRNA. Confers resistance to various aminoglycosides, including gentamicin and kanamycin. In Proteus mirabilis, this protein is 16S rRNA (guanine(1405)-N(7))-methyltransferase (rmtC).